Consider the following 248-residue polypeptide: Mannose-binding protein C (248 aa).

The first 20 residues, M1–S20, serve as a signal peptide directing secretion. One can recognise a Collagen-like domain in the interval G42–K99. Residues I43 to L107 form a disordered region. P47 carries the 4-hydroxyproline modification. The segment covering K49–E61 has biased composition (basic and acidic residues). Residues P73, P79, P82, and P88 each carry the 4-hydroxyproline modification. The segment covering K75–S87 has biased composition (pro residues). The segment covering Q93–D102 has biased composition (basic and acidic residues). Positions R112–L130 form a coiled coil. The 112-residue stretch at V134–E245 folds into the C-type lectin domain. 2 cysteine pairs are disulfide-bonded: C155/C244 and C222/C236.

In terms of assembly, oligomeric complex of 3 or more homotrimers. Interacts with MASP1 and MASP2. Interacts with MEP1A and MEP1B and may inhibit their catalytic activity. In terms of processing, hydroxylation on proline residues within the sequence motif, GXPG, is most likely to be 4-hydroxy as this fits the requirement for 4-hydroxylation in vertebrates.

The protein resides in the secreted. In terms of biological role, calcium-dependent lectin involved in innate immune defense. Binds mannose, fucose and N-acetylglucosamine on different microorganisms and activates the lectin complement pathway. Binds to late apoptotic cells, as well as to apoptotic blebs and to necrotic cells, but not to early apoptotic cells, facilitating their uptake by macrophages. The sequence is that of Mannose-binding protein C (MBL2) from Hylobates lar (Lar gibbon).